The sequence spans 475 residues: Flavin-dependent monooxygenase (475 aa).

This sequence belongs to the aromatic-ring hydroxylase family. FAD serves as cofactor.

The protein localises to the cytoplasm. The enzyme catalyses a tetracycline + NADPH + O2 + H(+) = an 11a-hydroxytetracycline + NADP(+) + H2O. It carries out the reaction tetracycline + NADPH + O2 + H(+) = 11a-hydroxytetracycline + NADP(+) + H2O. Its activity is regulated as follows. Inhibited by anhydrotetracycline. Functionally, an FAD-requiring monooxygenase active on some tetracycline antibiotic derivatives, which leads to their inactivation. Hydroxylates carbon 11a of tetracycline and some analogs. Confers resistance to tetracycline and doxycycline via an oxidoreductase activity; probably monooxygenates the antibiotics. Does not act on tigecycline. The polypeptide is Flavin-dependent monooxygenase (Mycobacteroides abscessus (strain ATCC 19977 / DSM 44196 / CCUG 20993 / CIP 104536 / JCM 13569 / NCTC 13031 / TMC 1543 / L948) (Mycobacterium abscessus)).